Reading from the N-terminus, the 957-residue chain is Thioredoxin domain-containing protein 11 (957 aa).

Positions 1-13 (MSECGGRGGGGGS) are enriched in gly residues. Positions 1–47 (MSECGGRGGGGGSSSSSDDAEDEGGGGGPAGSGSLSPAPAASSEGRL) are disordered. Residues 32 to 44 (SGSLSPAPAASSE) are compositionally biased toward low complexity. A helical transmembrane segment spans residues 64-84 (LLCGAVALGCALLLALKFTCS). Residues 91-213 (IPAKPPVSFF…IEKFVRRVMK (123 aa)) enclose the Thioredoxin 1 domain. Intrachain disulfides connect C441/C444 and C691/C694. Residues 621 to 771 (LDPKQALMKF…LLRFILHHSD (151 aa)) form the Thioredoxin 2 domain. A coiled-coil region spans residues 785–889 (AECLQNEAVL…ADASETLLTE (105 aa)). The span at 904–925 (LEGRDGADDRVPPSKARSEHPE) shows a compositional bias: basic and acidic residues. The disordered stretch occupies residues 904–957 (LEGRDGADDRVPPSKARSEHPEPPGAPRLPASTPLPANISSTLASEGSPENRTD). Positions 941–951 (NISSTLASEGS) are enriched in polar residues.

Belongs to the protein disulfide isomerase family. As to quaternary structure, interacts with the cytoplasmic part of DUOX1 and DUOX2. Interacts with TPO and CYBA.

The protein localises to the endoplasmic reticulum membrane. Functionally, may act as a redox regulator involved in DUOX proteins folding. The interaction with DUOX1 and DUOX2 suggest that it belongs to a multiprotein complex constituting the thyroid H(2)O(2) generating system. It is however not sufficient to assist DUOX1 and DUOX2 in H(2)O(2) generation. This chain is Thioredoxin domain-containing protein 11 (TXNDC11), found in Bos taurus (Bovine).